The sequence spans 318 residues: L-lactate dehydrogenase (318 aa).

Residues Val15, Asp36, and Lys41 each coordinate NAD(+). Residue Arg89 coordinates substrate. NAD(+)-binding positions include Ser102, 119–121, and Thr144; that span reads ITN. 121-124 provides a ligand contact to substrate; that stretch reads NPVD. Position 149-152 (149-152) interacts with substrate; the sequence is DSAR. The Proton acceptor role is filled by His176. Thr231 provides a ligand contact to substrate.

The protein belongs to the LDH/MDH superfamily. LDH family. As to quaternary structure, homotetramer.

Its subcellular location is the cytoplasm. It carries out the reaction (S)-lactate + NAD(+) = pyruvate + NADH + H(+). Its pathway is fermentation; pyruvate fermentation to lactate; (S)-lactate from pyruvate: step 1/1. Functionally, catalyzes the conversion of lactate to pyruvate. This Fusobacterium nucleatum subsp. nucleatum (strain ATCC 25586 / DSM 15643 / BCRC 10681 / CIP 101130 / JCM 8532 / KCTC 2640 / LMG 13131 / VPI 4355) protein is L-lactate dehydrogenase.